Consider the following 547-residue polypeptide: Chaperonin GroEL (547 aa).

Residues 30–33 (TLGP), K51, 87–91 (DGTTT), G415, and D496 each bind ATP. The disordered stretch occupies residues 528-547 (KEGAAPAGGMPDMGGMGGMM). The segment covering 538-547 (PDMGGMGGMM) has biased composition (gly residues).

The protein belongs to the chaperonin (HSP60) family. As to quaternary structure, forms a cylinder of 14 subunits composed of two heptameric rings stacked back-to-back. Interacts with the co-chaperonin GroES.

The protein resides in the cytoplasm. The enzyme catalyses ATP + H2O + a folded polypeptide = ADP + phosphate + an unfolded polypeptide.. In terms of biological role, together with its co-chaperonin GroES, plays an essential role in assisting protein folding. The GroEL-GroES system forms a nano-cage that allows encapsulation of the non-native substrate proteins and provides a physical environment optimized to promote and accelerate protein folding. In Ruegeria sp. (strain TM1040) (Silicibacter sp.), this protein is Chaperonin GroEL.